The sequence spans 360 residues: Phosphoserine aminotransferase (360 aa).

R42 is an L-glutamate binding site. Residues W102, T152, D171, and Q194 each contribute to the pyridoxal 5'-phosphate site. K195 carries the N6-(pyridoxal phosphate)lysine modification. 237 to 238 contributes to the pyridoxal 5'-phosphate binding site; the sequence is NT.

Belongs to the class-V pyridoxal-phosphate-dependent aminotransferase family. SerC subfamily. As to quaternary structure, homodimer. Requires pyridoxal 5'-phosphate as cofactor.

The protein localises to the cytoplasm. The catalysed reaction is O-phospho-L-serine + 2-oxoglutarate = 3-phosphooxypyruvate + L-glutamate. It catalyses the reaction 4-(phosphooxy)-L-threonine + 2-oxoglutarate = (R)-3-hydroxy-2-oxo-4-phosphooxybutanoate + L-glutamate. It participates in amino-acid biosynthesis; L-serine biosynthesis; L-serine from 3-phospho-D-glycerate: step 2/3. It functions in the pathway cofactor biosynthesis; pyridoxine 5'-phosphate biosynthesis; pyridoxine 5'-phosphate from D-erythrose 4-phosphate: step 3/5. In terms of biological role, catalyzes the reversible conversion of 3-phosphohydroxypyruvate to phosphoserine and of 3-hydroxy-2-oxo-4-phosphonooxybutanoate to phosphohydroxythreonine. The sequence is that of Phosphoserine aminotransferase from Coxiella burnetii (strain CbuG_Q212) (Coxiella burnetii (strain Q212)).